A 377-amino-acid chain; its full sequence is F-box protein At1g11810 (377 aa).

Positions 2 to 48 (TTTMSTLPVVLVDEILARVPITSLRSLRSTCKKWEASSKTNLVGGKA) constitute an F-box domain.

The protein is F-box protein At1g11810 of Arabidopsis thaliana (Mouse-ear cress).